A 179-amino-acid chain; its full sequence is ATP-dependent protease subunit HslV (179 aa).

T7 is a catalytic residue. Residues G162, C165, and T168 each contribute to the Na(+) site.

The protein belongs to the peptidase T1B family. HslV subfamily. A double ring-shaped homohexamer of HslV is capped on each side by a ring-shaped HslU homohexamer. The assembly of the HslU/HslV complex is dependent on binding of ATP.

The protein localises to the cytoplasm. It catalyses the reaction ATP-dependent cleavage of peptide bonds with broad specificity.. Allosterically activated by HslU binding. Protease subunit of a proteasome-like degradation complex believed to be a general protein degrading machinery. The protein is ATP-dependent protease subunit HslV of Bordetella petrii (strain ATCC BAA-461 / DSM 12804 / CCUG 43448).